The chain runs to 110 residues: UPF0213 protein DP2720 (110 aa).

The GIY-YIG domain occupies 12 to 88 (PAWFVYIVQC…KQLSPTRKRT (77 aa)).

This sequence belongs to the UPF0213 family.

This is UPF0213 protein DP2720 from Desulfotalea psychrophila (strain LSv54 / DSM 12343).